The primary structure comprises 302 residues: Bifunctional protein FolD (302 aa).

NADP(+) contacts are provided by residues 165–167, Ser190, and Ile231; that span reads GRS.

This sequence belongs to the tetrahydrofolate dehydrogenase/cyclohydrolase family. Homodimer.

It catalyses the reaction (6R)-5,10-methylene-5,6,7,8-tetrahydrofolate + NADP(+) = (6R)-5,10-methenyltetrahydrofolate + NADPH. The catalysed reaction is (6R)-5,10-methenyltetrahydrofolate + H2O = (6R)-10-formyltetrahydrofolate + H(+). It functions in the pathway one-carbon metabolism; tetrahydrofolate interconversion. Catalyzes the oxidation of 5,10-methylenetetrahydrofolate to 5,10-methenyltetrahydrofolate and then the hydrolysis of 5,10-methenyltetrahydrofolate to 10-formyltetrahydrofolate. The sequence is that of Bifunctional protein FolD from Prochlorococcus marinus (strain MIT 9313).